Consider the following 537-residue polypeptide: ATP-dependent RNA helicase ROK1 (537 aa).

The interval 14–51 is disordered; sequence KRSSNSDPGVKSESQNATKDKQNSLLRQVEKETDFFNT. A compositionally biased stretch (polar residues) spans 15–30; sequence RSSNSDPGVKSESQNA. Over residues 31 to 47 the composition is skewed to basic and acidic residues; sequence TKDKQNSLLRQVEKETD. The short motif at 106-134 is the Q motif element; that stretch reads DLIARCNLNRKLLANLIASGYSEPTAIQC. Positions 137 to 313 constitute a Helicase ATP-binding domain; the sequence is IPASAEGRDL…NSIMKDQIRI (177 aa). Residue 150–157 coordinates ATP; it reads APTGSGKT. The DEAD box motif lies at 260–263; it reads DEAD. In terms of domain architecture, Helicase C-terminal spans 324-488; the sequence is SIDQKLVFTG…GYSEWMESME (165 aa). The segment at 512–537 is disordered; that stretch reads PQVVSKKRKQRKEMIEASKRRKEETK. Residues 523–537 show a composition bias toward basic and acidic residues; the sequence is KEMIEASKRRKEETK.

The protein belongs to the DEAD box helicase family. DDX52/ROK1 subfamily. In terms of assembly, interacts with the U3 snoRNA and is associated with the 90S and 40S pre-ribosomes.

Its subcellular location is the nucleus. It is found in the nucleolus. It carries out the reaction ATP + H2O = ADP + phosphate + H(+). ATP-dependent RNA helicase involved in 40S ribosomal subunit biogenesis. Required for the processing and cleavage of 35S pre-rRNA at sites A0, A1, and A2, leading to mature 18S rRNA. This chain is ATP-dependent RNA helicase ROK1 (ROK1), found in Meyerozyma guilliermondii (strain ATCC 6260 / CBS 566 / DSM 6381 / JCM 1539 / NBRC 10279 / NRRL Y-324) (Yeast).